A 260-amino-acid chain; its full sequence is Proteasome subunit alpha (260 aa).

Residues 241 to 260 (VEAEEVPEKEEDYSELDSNY) are disordered. The segment covering 242–260 (EAEEVPEKEEDYSELDSNY) has biased composition (acidic residues).

This sequence belongs to the peptidase T1A family. As to quaternary structure, the 20S proteasome core is composed of 14 alpha and 14 beta subunits that assemble into four stacked heptameric rings, resulting in a barrel-shaped structure. The two inner rings, each composed of seven catalytic beta subunits, are sandwiched by two outer rings, each composed of seven alpha subunits. The catalytic chamber with the active sites is on the inside of the barrel. Has a gated structure, the ends of the cylinder being occluded by the N-termini of the alpha-subunits. Is capped at one or both ends by the proteasome regulatory ATPase, PAN.

The protein localises to the cytoplasm. The formation of the proteasomal ATPase PAN-20S proteasome complex, via the docking of the C-termini of PAN into the intersubunit pockets in the alpha-rings, triggers opening of the gate for substrate entry. Interconversion between the open-gate and close-gate conformations leads to a dynamic regulation of the 20S proteasome proteolysis activity. Component of the proteasome core, a large protease complex with broad specificity involved in protein degradation. This chain is Proteasome subunit alpha, found in Thermococcus sibiricus (strain DSM 12597 / MM 739).